Consider the following 419-residue polypeptide: MLTTRPRGTNDILPGEVEKWQFLEQLTRQVCREYGYGEIRTPIFEHTELFARGVGETTDIVEKEMYTFTDRGDRSITLRPEGTASTVRAYVENKLHALPQPVKLYYTGPMFRYDRPQAGRYRQFHQFGVEVFGSNDPAIDAEVIAMAMDIYHRIGLQNLKLHINSVGCPECRPVLRQRLQEYFKPHLSNLCSNCQGRYERNPLRILDCKSEKCQEIGQSAPTTLDVLCPECNSHFESVKTYLDAVGVSYIIDNRLVRGLDYYTRTAFEIMTQDIGAQSSIGGGGRYNGLIEECGGPATPGIGFALGLERILLTAERQGITFPITRGPQVYIATVGSGIERQAFALLQDLRRQGIAAEKDYLGRSLKAQMKFAGKLDTRFVVILGEEEFDRGVAVVRDMQAGEQQEVSLRELVLFIKART.

It belongs to the class-II aminoacyl-tRNA synthetase family. In terms of assembly, homodimer.

It localises to the cytoplasm. It catalyses the reaction tRNA(His) + L-histidine + ATP = L-histidyl-tRNA(His) + AMP + diphosphate + H(+). The chain is Histidine--tRNA ligase from Desulforamulus reducens (strain ATCC BAA-1160 / DSM 100696 / MI-1) (Desulfotomaculum reducens).